The following is a 309-amino-acid chain: Sulfate adenylyltransferase subunit 2 (309 aa).

Belongs to the PAPS reductase family. CysD subfamily. In terms of assembly, heterodimer composed of CysD, the smaller subunit, and CysN.

The catalysed reaction is sulfate + ATP + H(+) = adenosine 5'-phosphosulfate + diphosphate. The protein operates within sulfur metabolism; hydrogen sulfide biosynthesis; sulfite from sulfate: step 1/3. Its function is as follows. With CysN forms the ATP sulfurylase (ATPS) that catalyzes the adenylation of sulfate producing adenosine 5'-phosphosulfate (APS) and diphosphate, the first enzymatic step in sulfur assimilation pathway. APS synthesis involves the formation of a high-energy phosphoric-sulfuric acid anhydride bond driven by GTP hydrolysis by CysN coupled to ATP hydrolysis by CysD. In Mycobacterium bovis (strain ATCC BAA-935 / AF2122/97), this protein is Sulfate adenylyltransferase subunit 2.